Consider the following 272-residue polypeptide: HMP-PP phosphatase (272 aa).

Asp-8 functions as the Nucleophile in the catalytic mechanism. Residues Asp-8, Asp-10, and Asp-212 each contribute to the Mg(2+) site.

It belongs to the HAD-like hydrolase superfamily. Cof family. It depends on Mg(2+) as a cofactor.

The enzyme catalyses 4-amino-2-methyl-5-(diphosphooxymethyl)pyrimidine + H2O = 4-amino-2-methyl-5-(phosphooxymethyl)pyrimidine + phosphate + H(+). Functionally, catalyzes the hydrolysis of 4-amino-2-methyl-5-hydroxymethylpyrimidine pyrophosphate (HMP-PP) to 4-amino-2-methyl-5-hydroxymethylpyrimidine phosphate (HMP-P). The protein is HMP-PP phosphatase of Escherichia coli O6:H1 (strain CFT073 / ATCC 700928 / UPEC).